Here is a 308-residue protein sequence, read N- to C-terminus: tRNA dimethylallyltransferase (308 aa).

17–24 contacts ATP; it reads GPTGSGKS. 19–24 contacts substrate; sequence TGSGKS.

This sequence belongs to the IPP transferase family. As to quaternary structure, monomer. The cofactor is Mg(2+).

The catalysed reaction is adenosine(37) in tRNA + dimethylallyl diphosphate = N(6)-dimethylallyladenosine(37) in tRNA + diphosphate. In terms of biological role, catalyzes the transfer of a dimethylallyl group onto the adenine at position 37 in tRNAs that read codons beginning with uridine, leading to the formation of N6-(dimethylallyl)adenosine (i(6)A). The sequence is that of tRNA dimethylallyltransferase from Paenarthrobacter aurescens (strain TC1).